The primary structure comprises 456 residues: Bacteriochlorophyllide d C-12(1)-methyltransferase (456 aa).

In terms of domain architecture, Radical SAM core spans 178 to 405 (HAKKYSQLIP…MFEPKKLGGE (228 aa)). [4Fe-4S] cluster is bound by residues cysteine 194, cysteine 198, and cysteine 201.

It belongs to the radical SAM superfamily. It depends on [4Fe-4S] cluster as a cofactor.

Its subcellular location is the cytoplasm. It carries out the reaction 8-ethyl-12-methyl-3-vinylbacteriochlorophyllide d + S-adenosyl-L-methionine = 8,12-diethyl-3-vinylbacteriochlorophyllide d + S-adenosyl-L-homocysteine + H(+). The protein operates within porphyrin-containing compound metabolism; bacteriochlorophyll biosynthesis (light-independent). In terms of biological role, involved in the biosynthesis of the major light-harvesting pigment bacteriochlorophyll c (BChlc), which confers a significant competitive advantage to green sulfur bacteria living at limiting red and near-infrared light intensities. BchR is a methyltransferase that adds a single methyl group to the methyl carbon at the C-12(1) position of 8-ethyl-12-methyl-3-vinylbacteriochlorophyllide d to yield 8,12-diethyl-3-vinylbacteriochlorophyllide d. This Chlorobaculum tepidum (strain ATCC 49652 / DSM 12025 / NBRC 103806 / TLS) (Chlorobium tepidum) protein is Bacteriochlorophyllide d C-12(1)-methyltransferase.